A 212-amino-acid polypeptide reads, in one-letter code: Small ribosomal subunit protein uS3 (212 aa).

Residues 38–106 form the KH type-2 domain; sequence IRKFVKKTLY…EFAIEVNEIR (69 aa).

This sequence belongs to the universal ribosomal protein uS3 family. As to quaternary structure, part of the 30S ribosomal subunit. Forms a tight complex with proteins S10 and S14.

In terms of biological role, binds the lower part of the 30S subunit head. Binds mRNA in the 70S ribosome, positioning it for translation. The polypeptide is Small ribosomal subunit protein uS3 (Nitratidesulfovibrio vulgaris (strain ATCC 29579 / DSM 644 / CCUG 34227 / NCIMB 8303 / VKM B-1760 / Hildenborough) (Desulfovibrio vulgaris)).